An 84-amino-acid polypeptide reads, in one-letter code: Small ribosomal subunit protein uS17 (84 aa).

Belongs to the universal ribosomal protein uS17 family. As to quaternary structure, part of the 30S ribosomal subunit.

In terms of biological role, one of the primary rRNA binding proteins, it binds specifically to the 5'-end of 16S ribosomal RNA. This chain is Small ribosomal subunit protein uS17, found in Buchnera aphidicola subsp. Cinara cedri (strain Cc).